We begin with the raw amino-acid sequence, 398 residues long: Probable peptidoglycan glycosyltransferase FtsW (398 aa).

The Cytoplasmic segment spans residues 1–25; the sequence is MCYGGTAMMAFADIKEALTPKPSAQ. A helical transmembrane segment spans residues 26–46; it reads LYDVPLLYCMLMLMGVGFVMV. The Periplasmic portion of the chain corresponds to 47–69; sequence TSASMPTADRLFGNIYHFTIRHG. A helical membrane pass occupies residues 70 to 90; sequence IFLALSFCLFWITTSVPMSWW. Residue K91 is a topological domain, cytoplasmic. Residues 92 to 112 form a helical membrane-spanning segment; sequence KANPYLLLVGLGLLLIVLIVG. Residues 113–120 lie on the Periplasmic side of the membrane; the sequence is REVNGSTR. The helical transmembrane segment at 121–141 threads the bilayer; that stretch reads WIPIGPFNIQASELAKLFFFS. Residues 142–156 lie on the Cytoplasmic side of the membrane; the sequence is YISGYLVRKRSEVQE. Residues 157–177 form a helical membrane-spanning segment; that stretch reads NIKGFIKPILVFAAYAGLILM. Topologically, residues 178–179 are periplasmic; sequence QP. A helical membrane pass occupies residues 180-200; it reads DLGTVVVMFVTTVGLLFLAGA. K201 is a topological domain (cytoplasmic). A helical transmembrane segment spans residues 202–222; sequence LWQFFVLILTGVALVIGLIVL. The Periplasmic portion of the chain corresponds to 223–289; the sequence is EPYRMARVIG…DFIFAVIAEE (67 aa). A helical transmembrane segment spans residues 290 to 312; it reads LGFVGVSSILIVLGTLVFRALLI. At 313 to 324 the chain is on the cytoplasmic side; sequence GQNALKNGKEYE. Residues 325–345 traverse the membrane as a helical segment; it reads GYLALAIGIWFAFQTMVNVGA. At 346 to 356 the chain is on the periplasmic side; sequence SAGILPTKGLT. A helical transmembrane segment spans residues 357–377; sequence LPFISYGGSSLLMMTIAAGIL. At 378–398 the chain is on the cytoplasmic side; that stretch reads LRVDFETKMATKQATSGGAKR.

Belongs to the SEDS family. FtsW subfamily.

It is found in the cell inner membrane. The enzyme catalyses [GlcNAc-(1-&gt;4)-Mur2Ac(oyl-L-Ala-gamma-D-Glu-L-Lys-D-Ala-D-Ala)](n)-di-trans,octa-cis-undecaprenyl diphosphate + beta-D-GlcNAc-(1-&gt;4)-Mur2Ac(oyl-L-Ala-gamma-D-Glu-L-Lys-D-Ala-D-Ala)-di-trans,octa-cis-undecaprenyl diphosphate = [GlcNAc-(1-&gt;4)-Mur2Ac(oyl-L-Ala-gamma-D-Glu-L-Lys-D-Ala-D-Ala)](n+1)-di-trans,octa-cis-undecaprenyl diphosphate + di-trans,octa-cis-undecaprenyl diphosphate + H(+). It participates in cell wall biogenesis; peptidoglycan biosynthesis. In terms of biological role, peptidoglycan polymerase that is essential for cell division. This chain is Probable peptidoglycan glycosyltransferase FtsW, found in Pseudoalteromonas translucida (strain TAC 125).